The following is a 218-amino-acid chain: Methylthioribulose-1-phosphate dehydratase (218 aa).

Residues His107 and His109 each contribute to the Zn(2+) site.

This sequence belongs to the aldolase class II family. MtnB subfamily. Requires Zn(2+) as cofactor.

The enzyme catalyses 5-(methylsulfanyl)-D-ribulose 1-phosphate = 5-methylsulfanyl-2,3-dioxopentyl phosphate + H2O. It functions in the pathway amino-acid biosynthesis; L-methionine biosynthesis via salvage pathway; L-methionine from S-methyl-5-thio-alpha-D-ribose 1-phosphate: step 2/6. Catalyzes the dehydration of methylthioribulose-1-phosphate (MTRu-1-P) into 2,3-diketo-5-methylthiopentyl-1-phosphate (DK-MTP-1-P). In Xylella fastidiosa (strain Temecula1 / ATCC 700964), this protein is Methylthioribulose-1-phosphate dehydratase.